We begin with the raw amino-acid sequence, 357 residues long: tRNA/tmRNA (uracil-C(5))-methyltransferase (357 aa).

Positions 180, 209, 214, 230, and 290 each coordinate S-adenosyl-L-methionine. The active-site Nucleophile is the Cys315. The active-site Proton acceptor is Glu349.

It belongs to the class I-like SAM-binding methyltransferase superfamily. RNA M5U methyltransferase family. TrmA subfamily.

It catalyses the reaction uridine(54) in tRNA + S-adenosyl-L-methionine = 5-methyluridine(54) in tRNA + S-adenosyl-L-homocysteine + H(+). The enzyme catalyses uridine(341) in tmRNA + S-adenosyl-L-methionine = 5-methyluridine(341) in tmRNA + S-adenosyl-L-homocysteine + H(+). Functionally, dual-specificity methyltransferase that catalyzes the formation of 5-methyluridine at position 54 (m5U54) in all tRNAs, and that of position 341 (m5U341) in tmRNA (transfer-mRNA). The chain is tRNA/tmRNA (uracil-C(5))-methyltransferase from Campylobacter jejuni subsp. jejuni serotype O:2 (strain ATCC 700819 / NCTC 11168).